The following is a 439-amino-acid chain: 26S rRNA (cytosine-C(5))-methyltransferase nsun-5 (439 aa).

Asp-266, Asp-293, and Asp-313 together coordinate S-adenosyl-L-methionine. Cys-366 serves as the catalytic Nucleophile.

This sequence belongs to the class I-like SAM-binding methyltransferase superfamily. RsmB/NOP family.

The enzyme catalyses a cytidine in 26S rRNA + S-adenosyl-L-methionine = a 5-methylcytidine in 26S rRNA + S-adenosyl-L-homocysteine + H(+). S-adenosyl-L-methionine-dependent methyltransferase which methylates the carbon-5 position of cytosine 2381 to 5-methylcytosine (m5C2381) in 26S rRNA. Plays a role in the production of mature 5S, 5.8S, 18S and 26S rRNAs and promotes the processing of the internally transcribed spacer 2 (ITS2), which separates the 5.8S and 26S rRNAs on large pre-rRNA precursors. May play a role in the translation of leucine and proline codons. May play a role in maintaining ribosomal frameshifting in response to osmotic stress. Not required for global translation. The chain is 26S rRNA (cytosine-C(5))-methyltransferase nsun-5 from Caenorhabditis elegans.